The primary structure comprises 1040 residues: Putative protein tag-76 (1040 aa).

Over residues 1–15 (MSRRNATSFVDNNTL) the composition is skewed to polar residues. Disordered stretches follow at residues 1–61 (MSRR…GSVS) and 322–367 (RTSK…PGAN). The span at 16 to 32 (TSSGISGSGSMSPPITS) shows a compositional bias: low complexity. Residues 33–50 (RPASGQASPLTSNGSLSP) are compositionally biased toward polar residues. The span at 333–356 (GPGGPGGPGGYRGGRGGGRGGSYG) shows a compositional bias: gly residues. A PAZ domain is found at 379-486 (FTMDTLSRDT…LPMEHCLIDS (108 aa)). Positions 660–966 (CIIVVLQSKN…VATRARCHVK (307 aa)) constitute a Piwi domain.

In Caenorhabditis elegans, this protein is Putative protein tag-76 (tag-76).